The chain runs to 207 residues: Large ribosomal subunit protein uL4 (207 aa).

Residues Glu-53–Gly-85 are disordered.

The protein belongs to the universal ribosomal protein uL4 family. Part of the 50S ribosomal subunit.

In terms of biological role, one of the primary rRNA binding proteins, this protein initially binds near the 5'-end of the 23S rRNA. It is important during the early stages of 50S assembly. It makes multiple contacts with different domains of the 23S rRNA in the assembled 50S subunit and ribosome. Forms part of the polypeptide exit tunnel. This Novosphingobium aromaticivorans (strain ATCC 700278 / DSM 12444 / CCUG 56034 / CIP 105152 / NBRC 16084 / F199) protein is Large ribosomal subunit protein uL4.